Reading from the N-terminus, the 160-residue chain is Endoribonuclease YbeY (160 aa).

H121, H125, and H131 together coordinate Zn(2+).

It belongs to the endoribonuclease YbeY family. It depends on Zn(2+) as a cofactor.

Its subcellular location is the cytoplasm. Functionally, single strand-specific metallo-endoribonuclease involved in late-stage 70S ribosome quality control and in maturation of the 3' terminus of the 16S rRNA. The protein is Endoribonuclease YbeY of Syntrophus aciditrophicus (strain SB).